Here is a 406-residue protein sequence, read N- to C-terminus: Elongation factor Ts, mitochondrial (406 aa).

A disordered region spans residues 387 to 406 (ARPSDETSFADQVKEAAGLA).

It belongs to the EF-Ts family.

It localises to the mitochondrion. Associates with the EF-Tu.GDP complex and induces the exchange of GDP to GTP. It remains bound to the aminoacyl-tRNA.EF-Tu.GTP complex up to the GTP hydrolysis stage on the ribosome. This is Elongation factor Ts, mitochondrial from Malassezia globosa (strain ATCC MYA-4612 / CBS 7966) (Dandruff-associated fungus).